The primary structure comprises 250 residues: Protein orai-2 (250 aa).

4 helical membrane passes run 66–83 (TSAL…EVQL), 94–114 (LIAF…ALLI), 148–168 (LAWG…VVLL), and 192–212 (AALV…VFTI).

Belongs to the Orai family. As to quaternary structure, oligomerizes in homomeric and heteromeric ORAI complexes. Native CRAC channels most likely consist of hexameric ORAI heteromers, implying that diverse ORAI1, ORAI2 and ORAI3 subunit combinations with distinct biophysical properties can operate in a cell-type specific way. Interacts with STIM1; this regulates channel activity. Interacts with CRACR2A/EFCAB4B.

It is found in the cell membrane. The enzyme catalyses Ca(2+)(in) = Ca(2+)(out). Its activity is regulated as follows. CRAC channels are regulated by fast Ca(2+)-dependent inactivation (FCDI), a mechanism that limits Ca(2+) influx and cell toxicity. ORAI2 channels display prominent FCDI. Inhibited by lanthanides such as Gd(3+) ions. Pore-forming subunit of inward rectifying Ca(2+) release-activated Ca(2+) (CRAC) channels. Assembles with ORAI1 and ORAI3 to form hexameric CRAC channels that mediate Ca(2+) influx upon depletion of endoplasmic reticulum Ca(2+) store and channel activation by Ca(2+) sensor STIM1, a process known as store-operated Ca(2+) entry (SOCE). Various pore subunit combinations may account for distinct CRAC channel spatiotemporal and cell-type specific dynamics. ORAI1 mainly contributes to the generation of Ca(2+) plateaus involved in sustained Ca(2+) entry and is dispensable for cytosolic Ca(2+) oscillations, whereas ORAI2 and ORAI3 generate oscillatory patterns. CRAC channels assemble in Ca(2+) signaling microdomains where Ca(2+) influx is coupled to calmodulin and calcineurin signaling and activation of NFAT transcription factors recruited to ORAI1 via AKAP5. CRAC channels are the main pathway for Ca(2+) influx in T cells and promote the immune response to pathogens by activating NFAT-dependent cytokine and chemokine transcription. This is Protein orai-2 (Orai2) from Mus musculus (Mouse).